Consider the following 255-residue polypeptide: Borealin-2 (255 aa).

Disordered regions lie at residues 1 to 24 (MAPR…HSFE) and 107 to 156 (IQKP…STGS). The segment covering 124 to 135 (AGQQRSSSQSKT) has biased composition (polar residues).

This sequence belongs to the borealin family. As to quaternary structure, component of the CPC complex.

The protein resides in the nucleus. It is found in the chromosome. Its subcellular location is the centromere. Component of the chromosomal passenger complex (CPC), a complex that acts as a key regulator of mitosis. The CPC complex has essential functions at the centromere in ensuring correct chromosome alignment and segregation and is required for chromatin-induced microtubule stabilization and spindle assembly. This Danio rerio (Zebrafish) protein is Borealin-2 (cdca9).